The primary structure comprises 275 residues: Glucosamine-6-phosphate deaminase 2 (275 aa).

Catalysis depends on aspartate 72, which acts as the Proton acceptor; for enolization step. The stretch at 103 to 131 (NAHILDGNASDLQAECEDFERKIKEAGGI) forms a coiled coil. Aspartate 141 functions as the For ring-opening step in the catalytic mechanism. The Proton acceptor; for ring-opening step role is filled by histidine 143. The For ring-opening step role is filled by glutamate 148.

Belongs to the glucosamine/galactosamine-6-phosphate isomerase family. Homohexamer.

It localises to the cytoplasm. The catalysed reaction is alpha-D-glucosamine 6-phosphate + H2O = beta-D-fructose 6-phosphate + NH4(+). Catalyzes the reversible conversion of alpha-D-glucosamine 6-phosphate (GlcN-6P) into beta-D-fructose 6-phosphate (Fru-6P) and ammonium ion, a regulatory reaction step in de novo uridine diphosphate-N-acetyl-alpha-D-glucosamine (UDP-GlcNAc) biosynthesis via hexosamine pathway. This chain is Glucosamine-6-phosphate deaminase 2, found in Xenopus tropicalis (Western clawed frog).